The chain runs to 166 residues: Lipoprotein signal peptidase (166 aa).

Transmembrane regions (helical) follow at residues Val-11–Val-31, Leu-42–Ser-62, Trp-67–Leu-87, and Leu-90–Gly-110. Residues Asp-123 and Asp-141 contribute to the active site. Residues His-133 to Phe-153 traverse the membrane as a helical segment.

Belongs to the peptidase A8 family.

The protein resides in the cell inner membrane. The enzyme catalyses Release of signal peptides from bacterial membrane prolipoproteins. Hydrolyzes -Xaa-Yaa-Zaa-|-(S,diacylglyceryl)Cys-, in which Xaa is hydrophobic (preferably Leu), and Yaa (Ala or Ser) and Zaa (Gly or Ala) have small, neutral side chains.. Its pathway is protein modification; lipoprotein biosynthesis (signal peptide cleavage). This protein specifically catalyzes the removal of signal peptides from prolipoproteins. The protein is Lipoprotein signal peptidase of Pseudoalteromonas translucida (strain TAC 125).